The primary structure comprises 98 residues: MTRSKRRLILKFNMISFFSAVSLLHYFLPSRKSISMFKKVFVSHAKAPRVDFSRRAGLAARRMEEKRKDATNLWFILYKVLICIYTYSISISLHTPCV.

The next 2 membrane-spanning stretches (helical) occupy residues 8–28 (LILK…HYFL) and 73–93 (LWFI…SISL).

It is found in the membrane. This is an uncharacterized protein from Saccharomyces cerevisiae (strain ATCC 204508 / S288c) (Baker's yeast).